The sequence spans 428 residues: Methyl-branched lipid omega-hydroxylase (428 aa).

Cys-379 contributes to the heme binding site.

The protein belongs to the cytochrome P450 family. Heme serves as cofactor.

It carries out the reaction a methyl-branched lipid + O2 + 2 reduced ferredoxin [iron-sulfur] cluster + 2 H(+) = an omega-hydroxy-methyl-branched lipid + H2O + 2 oxidized ferredoxin [iron-sulfur] cluster.. The enzyme catalyses cholest-4-en-3-one + 6 reduced [2Fe-2S]-[ferredoxin] + 3 O2 + 5 H(+) = (25R)-3-oxocholest-4-en-26-oate + 6 oxidized [2Fe-2S]-[ferredoxin] + 4 H2O. Its pathway is lipid metabolism; branched-chain fatty acid metabolism. Its function is as follows. Primarily hydroxylates the omega-carbon of a number of methyl-branched lipids, including (2E,6E)-farnesol, phytanate, geranylgeraniol, 15-methylpalmitate and (2E,6E)-farnesyl diphosphate. Also catalyzes the sequential oxidation of the terminal methyl of cholest-4-en-3-one into (25R)-26-hydroxycholest-4-en-3-one (alcohol), (25R)-26-oxocholest-4-en-3-one (aldehyde), to finally yield the carboxylic acid (25R)-3-oxocholest-4-en-26-oate. Also able to sequentially oxidize cholesterol itself, not only cholest-4-en-3-one. The sequence is that of Methyl-branched lipid omega-hydroxylase (cyp124) from Mycobacterium bovis (strain ATCC BAA-935 / AF2122/97).